A 139-amino-acid polypeptide reads, in one-letter code: Transcription factor E (139 aa).

Residues 7 to 91 form the HTH TFE/IIEalpha-type domain; it reads IINKKQDEVS…DYEKILDTLL (85 aa).

It belongs to the TFE family. Monomer. Interaction with RNA polymerase subunits RpoF and RpoE is necessary for Tfe stimulatory transcription activity. Able to interact with Tbp and RNA polymerase in the absence of DNA promoter. Interacts both with the preinitiation and elongation complexes.

In terms of biological role, transcription factor that plays a role in the activation of archaeal genes transcribed by RNA polymerase. Facilitates transcription initiation by enhancing TATA-box recognition by TATA-box-binding protein (Tbp), and transcription factor B (Tfb) and RNA polymerase recruitment. Not absolutely required for transcription in vitro, but particularly important in cases where Tbp or Tfb function is not optimal. It dynamically alters the nucleic acid-binding properties of RNA polymerases by stabilizing the initiation complex and destabilizing elongation complexes. Seems to translocate with the RNA polymerase following initiation and acts by binding to the non template strand of the transcription bubble in elongation complexes. This chain is Transcription factor E, found in Nanoarchaeum equitans (strain Kin4-M).